Reading from the N-terminus, the 370-residue chain is Chaperone protein DnaJ (370 aa).

The J domain maps to 5–70; that stretch reads DYYEVLGVSK…EKRSMYDRMG (66 aa). A CR-type zinc finger spans residues 134–212; sequence GVKKTITFTA…CHGSGVADRQ (79 aa). Zn(2+)-binding residues include Cys-147, Cys-150, Cys-164, Cys-167, Cys-186, Cys-189, Cys-200, and Cys-203. CXXCXGXG motif repeat units lie at residues 147 to 154, 164 to 171, 186 to 193, and 200 to 207; these read CDVCDGKG, CKTCHGSG, CGTCRGQG, and CHACHGSG. Residues 351–370 are disordered; that stretch reads DGEDSASSPKKKSFFDRLFD.

This sequence belongs to the DnaJ family. As to quaternary structure, homodimer. Zn(2+) is required as a cofactor.

The protein localises to the cytoplasm. In terms of biological role, participates actively in the response to hyperosmotic and heat shock by preventing the aggregation of stress-denatured proteins and by disaggregating proteins, also in an autonomous, DnaK-independent fashion. Unfolded proteins bind initially to DnaJ; upon interaction with the DnaJ-bound protein, DnaK hydrolyzes its bound ATP, resulting in the formation of a stable complex. GrpE releases ADP from DnaK; ATP binding to DnaK triggers the release of the substrate protein, thus completing the reaction cycle. Several rounds of ATP-dependent interactions between DnaJ, DnaK and GrpE are required for fully efficient folding. Also involved, together with DnaK and GrpE, in the DNA replication of plasmids through activation of initiation proteins. In Acinetobacter baumannii (strain AB0057), this protein is Chaperone protein DnaJ.